A 162-amino-acid chain; its full sequence is Ribosome-binding factor A (162 aa).

Residues aspartate 121–aspartate 162 are disordered. Low complexity predominate over residues arginine 125–proline 136.

It belongs to the RbfA family. As to quaternary structure, monomer. Binds 30S ribosomal subunits, but not 50S ribosomal subunits or 70S ribosomes.

The protein localises to the cytoplasm. Its function is as follows. One of several proteins that assist in the late maturation steps of the functional core of the 30S ribosomal subunit. Associates with free 30S ribosomal subunits (but not with 30S subunits that are part of 70S ribosomes or polysomes). Required for efficient processing of 16S rRNA. May interact with the 5'-terminal helix region of 16S rRNA. This Rhodococcus jostii (strain RHA1) protein is Ribosome-binding factor A.